The primary structure comprises 398 residues: Spermatogenesis associated 6-like protein (398 aa).

The segment at 170 to 215 (KLNGPANNRKKKPKEKNSDQLSKGTPFWGPSPQRLHLHRPTQRNPG) is disordered. Residues Ser-269 and Ser-272 each carry the phosphoserine modification.

This sequence belongs to the SPATA6 family.

The protein is Spermatogenesis associated 6-like protein (Spata6l) of Rattus norvegicus (Rat).